Here is a 551-residue protein sequence, read N- to C-terminus: High-affinity glucose transporter (551 aa).

Residues 1–27 are Cytoplasmic-facing; that stretch reads MSLKNWLLLRDIQYEGTFYKKFPHVYN. Residues 28–48 traverse the membrane as a helical segment; that stretch reads IYVIGFIACISGLMFGFDIAS. Topologically, residues 49–70 are extracellular; the sequence is MSSMIGTDVYKDYFSNPDSLTY. A helical membrane pass occupies residues 71–91; it reads GGITASMAGGSFLGSLISPNF. Topologically, residues 92–98 are cytoplasmic; sequence SDAFGRK. Residues 99–119 form a helical membrane-spanning segment; that stretch reads VSLHICAALWIIGAILQCAAQ. At 120–123 the chain is on the extracellular side; it reads DQAM. The chain crosses the membrane as a helical span at residues 124 to 144; sequence LIVGRVISGMGIGFGSSAAPV. Residues 145–155 lie on the Cytoplasmic side of the membrane; the sequence is YCSEISPPKIR. The chain crosses the membrane as a helical span at residues 156–176; sequence GTISGLFQFSVTVGIMVLFYI. Topologically, residues 177-190 are extracellular; sequence GYGCHFIDGAAAFR. The helical transmembrane segment at 191–211 threads the bilayer; it reads ITWGLQMVPGLILMVGVFFIP. At 212 to 289 the chain is on the cytoplasmic side; sequence ESPRWLANHD…VGVSAQMWQQ (78 aa). Residues 290 to 310 traverse the membrane as a helical segment; that stretch reads LCGMNVMMYYIVYIFNMAGYT. Residues 311–315 are Extracellular-facing; it reads GNTNL. A helical transmembrane segment spans residues 316–336; the sequence is VASSIQYVLNVVMTIPALFLI. Residues 337–343 lie on the Cytoplasmic side of the membrane; it reads DKFGRRP. A helical membrane pass occupies residues 344–364; that stretch reads VLIIGGIFMFTWLFSVAGILA. The Extracellular portion of the chain corresponds to 365 to 395; the sequence is TYSVPAPGGVNGDDTVTIQIPSENTSAANGV. Residue asparagine 388 is glycosylated (N-linked (GlcNAc...) asparagine). The chain crosses the membrane as a helical span at residues 396–416; that stretch reads IASSYLFVCFFAPTWGIGIWI. The Cytoplasmic portion of the chain corresponds to 417-432; that stretch reads YCSEIFNNMERAKGSA. The chain crosses the membrane as a helical span at residues 433-453; the sequence is LSAATNWAFNFALAMFVPSAF. The Extracellular portion of the chain corresponds to 454 to 459; the sequence is KNISWK. The helical transmembrane segment at 460 to 480 threads the bilayer; sequence TYIIFGVFSVALTIQTFFMFP. Over 481–551 the chain is Cytoplasmic; it reads ETKGKTLEEI…DRSDSASNSN (71 aa).

This sequence belongs to the major facilitator superfamily. Sugar transporter (TC 2.A.1.1) family.

Its subcellular location is the membrane. In terms of biological role, high-affinity glucose transporter. This chain is High-affinity glucose transporter (HGT1), found in Kluyveromyces lactis (strain ATCC 8585 / CBS 2359 / DSM 70799 / NBRC 1267 / NRRL Y-1140 / WM37) (Yeast).